Consider the following 345-residue polypeptide: Phosphate acyltransferase (345 aa).

This sequence belongs to the PlsX family. As to quaternary structure, homodimer. Probably interacts with PlsY.

The protein resides in the cytoplasm. The enzyme catalyses a fatty acyl-[ACP] + phosphate = an acyl phosphate + holo-[ACP]. It functions in the pathway lipid metabolism; phospholipid metabolism. Its function is as follows. Catalyzes the reversible formation of acyl-phosphate (acyl-PO(4)) from acyl-[acyl-carrier-protein] (acyl-ACP). This enzyme utilizes acyl-ACP as fatty acyl donor, but not acyl-CoA. In Photorhabdus laumondii subsp. laumondii (strain DSM 15139 / CIP 105565 / TT01) (Photorhabdus luminescens subsp. laumondii), this protein is Phosphate acyltransferase.